Reading from the N-terminus, the 119-residue chain is Small polypeptide DEVIL 24 (119 aa).

The interval 83–114 is required for DVL/RTFL small polypeptide activity; that stretch reads SFTSKCTSLMKQQHARLCIIRLCATMLLRSYT. Residues 96 to 113 traverse the membrane as a helical segment; sequence HARLCIIRLCATMLLRSY.

It belongs to the DVL/RTFL small polypeptides family.

The protein resides in the cell membrane. Small polypeptide acting as a regulatory molecule which coordinates cellular responses required for differentiation, growth and development, probably by restricting polar cell proliferation in lateral organs and coordinating socket cell recruitment and differentiation at trichome sites. This is Small polypeptide DEVIL 24 from Arabidopsis thaliana (Mouse-ear cress).